The primary structure comprises 377 residues: Phospho-N-acetylmuramoyl-pentapeptide-transferase (377 aa).

The next 10 membrane-spanning stretches (helical) occupy residues T27 to E47, G71 to W91, L94 to F114, I139 to S159, V182 to V202, G216 to S236, M252 to W272, I280 to V300, L305 to V325, and K354 to L374.

Belongs to the glycosyltransferase 4 family. MraY subfamily. The cofactor is Mg(2+).

Its subcellular location is the cell inner membrane. It carries out the reaction UDP-N-acetyl-alpha-D-muramoyl-L-alanyl-gamma-D-glutamyl-meso-2,6-diaminopimeloyl-D-alanyl-D-alanine + di-trans,octa-cis-undecaprenyl phosphate = di-trans,octa-cis-undecaprenyl diphospho-N-acetyl-alpha-D-muramoyl-L-alanyl-D-glutamyl-meso-2,6-diaminopimeloyl-D-alanyl-D-alanine + UMP. Its pathway is cell wall biogenesis; peptidoglycan biosynthesis. Catalyzes the initial step of the lipid cycle reactions in the biosynthesis of the cell wall peptidoglycan: transfers peptidoglycan precursor phospho-MurNAc-pentapeptide from UDP-MurNAc-pentapeptide onto the lipid carrier undecaprenyl phosphate, yielding undecaprenyl-pyrophosphoryl-MurNAc-pentapeptide, known as lipid I. The chain is Phospho-N-acetylmuramoyl-pentapeptide-transferase from Acidobacterium capsulatum (strain ATCC 51196 / DSM 11244 / BCRC 80197 / JCM 7670 / NBRC 15755 / NCIMB 13165 / 161).